The primary structure comprises 144 residues: Arginine decarboxylase proenzyme (144 aa).

The active-site Schiff-base intermediate with substrate; via pyruvic acid is the Ser-80. Ser-80 is subject to Pyruvic acid (Ser); by autocatalysis. Residue His-85 is the Proton acceptor; for processing activity of the active site. Cys-100 serves as the catalytic Proton donor; for catalytic activity.

This sequence belongs to the prokaryotic AdoMetDC family. Type 1 subfamily. Heterooctamer of four alpha and four beta chains arranged as a tetramer of alpha/beta heterodimers. It depends on pyruvate as a cofactor. Post-translationally, is synthesized initially as an inactive proenzyme. Formation of the active enzyme involves a self-maturation process in which the active site pyruvoyl group is generated from an internal serine residue via an autocatalytic post-translational modification. Two non-identical subunits are generated from the proenzyme in this reaction, and the pyruvate is formed at the N-terminus of the alpha chain, which is derived from the carboxyl end of the proenzyme. The post-translation cleavage follows an unusual pathway, termed non-hydrolytic serinolysis, in which the side chain hydroxyl group of the serine supplies its oxygen atom to form the C-terminus of the beta chain, while the remainder of the serine residue undergoes an oxidative deamination to produce ammonia and the pyruvoyl group blocking the N-terminus of the alpha chain.

It catalyses the reaction L-arginine + H(+) = agmatine + CO2. It functions in the pathway amine and polyamine biosynthesis; agmatine biosynthesis; agmatine from L-arginine: step 1/1. In terms of biological role, specifically catalyzes the decarboxylation of L-arginine to agmatine. Has no S-adenosylmethionine decarboxylase (AdoMetDC) activity. This chain is Arginine decarboxylase proenzyme, found in Ignicoccus hospitalis (strain KIN4/I / DSM 18386 / JCM 14125).